The primary structure comprises 210 residues: Ribosomal RNA small subunit methyltransferase G (210 aa).

Residues G74, F79, 127–128, and R143 contribute to the S-adenosyl-L-methionine site; that span reads IE.

The protein belongs to the methyltransferase superfamily. RNA methyltransferase RsmG family.

The protein localises to the cytoplasm. It catalyses the reaction guanosine(527) in 16S rRNA + S-adenosyl-L-methionine = N(7)-methylguanosine(527) in 16S rRNA + S-adenosyl-L-homocysteine. Functionally, specifically methylates the N7 position of guanine in position 527 of 16S rRNA. The sequence is that of Ribosomal RNA small subunit methyltransferase G from Chelativorans sp. (strain BNC1).